We begin with the raw amino-acid sequence, 108 residues long: Insulin (108 aa).

Residues 1 to 24 (MALWMHLLPLLALLALWGPEPAPA) form the signal peptide. Intrachain disulfides connect C31–C94, C43–C107, and C93–C98. Positions 57–85 (EAEDLQVGQVELGGGSITGSLPPLEGPMQ) are cleaved as a propeptide — c peptide.

It belongs to the insulin family. In terms of assembly, heterodimer of a B chain and an A chain linked by two disulfide bonds.

It is found in the secreted. Its function is as follows. Insulin decreases blood glucose concentration. It increases cell permeability to monosaccharides, amino acids and fatty acids. It accelerates glycolysis, the pentose phosphate cycle, and glycogen synthesis in liver. This chain is Insulin (INS), found in Aotus trivirgatus (Three-striped night monkey).